Consider the following 205-residue polypeptide: SCO2-like protein RC0895 (205 aa).

Positions 82, 86, and 172 each coordinate Cu cation.

It belongs to the SCO1/2 family.

This is SCO2-like protein RC0895 from Rickettsia conorii (strain ATCC VR-613 / Malish 7).